Reading from the N-terminus, the 141-residue chain is Probable mitochondrial pyruvate carrier 1 (141 aa).

The next 2 membrane-spanning stretches (helical) occupy residues 31 to 52 (YLCS…AAIL) and 60 to 82 (LISG…YAWM).

Belongs to the mitochondrial pyruvate carrier (MPC) (TC 2.A.105) family. As to quaternary structure, the functional 150 kDa pyruvate import complex is a heteromer of mpc1 and mpc2.

Its subcellular location is the mitochondrion. It localises to the mitochondrion inner membrane. Mediates the uptake of pyruvate into mitochondria. This chain is Probable mitochondrial pyruvate carrier 1, found in Schizosaccharomyces pombe (strain 972 / ATCC 24843) (Fission yeast).